Here is a 590-residue protein sequence, read N- to C-terminus: MAGAAPGAIMDEDYFGSAAEWGDEADGGQQEDDYGEGEDDAEVQQECLHKFSTRDYIMEPSIFNTLKRYFQAGGSPENVIQLLSENYTAVAQTVNLLAEWLIQTGVEPVQVQETVENHLKSLLIKHFDPRKADSIFTEEGETPAWLEQMIAHTTWRDLFYKLAEAHPDCLMLNFTVKLISDAGYQGEITSVSTACQQLEVFSRVLRTSLATILDGGEENLEKHLPEFAKMVCHGEHTYLFAQAMMSVLAQEEQGGSAVRRVAQEVQRFAQEKGHDASQITLALGTAASYPRACQALGAMLSKGALNPADITVLFKMFTSMDPPPVELIRVPAFLDLFMQSLFKPGARINQDHKHKYIHILAYAASVVETWKKNKRVSINKDELKSTSKAVETVHNLCCNENKGASELVAELSTLYQCIRFPVVAMGVLKWVDWTVSEPRYFQLQTDHTPVHLALLDEISTCHQLLHPQVLQLLVKLFETEHSQLDVMEQLELKKTLLDRMVHLLSRGHVLPVVSYIRKCLEKLDTDISLIRHFVTEVLDVIAPPYTSDFVQLFLPILENDSIAGTIKTEGEHDPVTEFIAHCKSNFILVN.

Positions 15–43 (FGSAAEWGDEADGGQQEDDYGEGEDDAEV) are disordered. Residues 21–43 (WGDEADGGQQEDDYGEGEDDAEV) show a composition bias toward acidic residues.

Belongs to the NELF-D family. As to quaternary structure, the NELF complex is composed of NELFA, NELFB, NELFCD and NELFE; NELFA and NELFCD form a stable subcomplex that binds primarily through NELFCD to the N-terminus of NELFB. Binds RNA which may help to stabilize the NELF complex on nucleic acid. In vitro, the NELFA:NELFCD subcomplex binds to ssDNA and ssRNA in a sequence- and structure-dependent manner. Interacts with ARAF1. Interacts with PCF11. Interacts with NELFB. Interacts with KAT8.

The protein resides in the nucleus. Its function is as follows. Essential component of the NELF complex, a complex that negatively regulates the elongation of transcription by RNA polymerase II. The NELF complex, which acts via an association with the DSIF complex and causes transcriptional pausing, is counteracted by the P-TEFb kinase complex. This chain is Negative elongation factor D (NELFCD), found in Sus scrofa (Pig).